A 65-amino-acid polypeptide reads, in one-letter code: Conotoxin Lt5.1 (65 aa).

The first 19 residues, 1-19 (MRCLPVFIILLLLIPSAPS), serve as a signal peptide directing secretion. A propeptide spanning residues 20 to 48 (VDAQRKTKDDVPLASFHDNAKRTLKRLWN) is cleaved from the precursor.

It belongs to the conotoxin T superfamily. Contains 2 disulfide bonds that can be either 'C1-C3, C2-C4' or 'C1-C4, C2-C3', since these disulfide connectivities have been observed for conotoxins with cysteine framework V (for examples, see AC P0DQQ7 and AC P81755). In terms of tissue distribution, expressed by the venom duct.

The protein localises to the secreted. The chain is Conotoxin Lt5.1 from Conus litteratus (Lettered cone).